Reading from the N-terminus, the 356-residue chain is Glutamine synthetase cytosolic isozyme 1-4 (356 aa).

Residue Ser-2 is modified to N-acetylserine. Phosphoserine occurs at positions 2 and 48. A GS beta-grasp domain is found at Ile-19–Gly-99. The interval Ala-37–Asp-66 is disordered. A GS catalytic domain is found at Lys-106 to Pro-356.

This sequence belongs to the glutamine synthetase family. In terms of assembly, homooctamer. Interacts with GRF3. In terms of tissue distribution, expressed in the pericycle in the region of lateral root emergence.

It is found in the cytoplasm. It carries out the reaction L-glutamate + NH4(+) + ATP = L-glutamine + ADP + phosphate + H(+). Its function is as follows. High-affinity glutamine synthetase. May contribute to the homeostatic control of glutamine synthesis in roots. This is Glutamine synthetase cytosolic isozyme 1-4 from Arabidopsis thaliana (Mouse-ear cress).